Consider the following 99-residue polypeptide: Co-chaperonin GroES (99 aa).

It belongs to the GroES chaperonin family. Heptamer of 7 subunits arranged in a ring. Interacts with the chaperonin GroEL.

It localises to the cytoplasm. Together with the chaperonin GroEL, plays an essential role in assisting protein folding. The GroEL-GroES system forms a nano-cage that allows encapsulation of the non-native substrate proteins and provides a physical environment optimized to promote and accelerate protein folding. GroES binds to the apical surface of the GroEL ring, thereby capping the opening of the GroEL channel. This is Co-chaperonin GroES from Corynebacterium kroppenstedtii (strain DSM 44385 / JCM 11950 / CIP 105744 / CCUG 35717).